The primary structure comprises 414 residues: Tyrosine--tRNA ligase (414 aa).

Tyr35 lines the L-tyrosine pocket. Positions 40–49 (PTADSLHVGH) match the 'HIGH' region motif. L-tyrosine contacts are provided by Tyr164 and Gln168. The 'KMSKS' region motif lies at 226–230 (KFGKT). Lys229 contacts ATP. The 68-residue stretch at 347–414 (TKVIDALVEL…KKKYFVILVK (68 aa)) folds into the S4 RNA-binding domain.

Belongs to the class-I aminoacyl-tRNA synthetase family. TyrS type 1 subfamily. Homodimer.

The protein localises to the cytoplasm. It carries out the reaction tRNA(Tyr) + L-tyrosine + ATP = L-tyrosyl-tRNA(Tyr) + AMP + diphosphate + H(+). In terms of biological role, catalyzes the attachment of tyrosine to tRNA(Tyr) in a two-step reaction: tyrosine is first activated by ATP to form Tyr-AMP and then transferred to the acceptor end of tRNA(Tyr). The polypeptide is Tyrosine--tRNA ligase (Mycoplasma capricolum subsp. capricolum (strain California kid / ATCC 27343 / NCTC 10154)).